A 258-amino-acid polypeptide reads, in one-letter code: UPF0246 protein YaaA (258 aa).

Belongs to the UPF0246 family.

In Escherichia coli O17:K52:H18 (strain UMN026 / ExPEC), this protein is UPF0246 protein YaaA.